Reading from the N-terminus, the 147-residue chain is uncharacterized protein (147 aa).

This is an uncharacterized protein from Acidianus convivator (ATV).